Here is a 248-residue protein sequence, read N- to C-terminus: DNA repair protein RecO (248 aa).

This sequence belongs to the RecO family.

Involved in DNA repair and RecF pathway recombination. The protein is DNA repair protein RecO of Chelativorans sp. (strain BNC1).